The following is a 323-amino-acid chain: ATP synthase gamma chain (323 aa).

The protein belongs to the ATPase gamma chain family. As to quaternary structure, F-type ATPases have 2 components, CF(1) - the catalytic core - and CF(0) - the membrane proton channel. CF(1) has five subunits: alpha(3), beta(3), gamma(1), delta(1), epsilon(1). CF(0) has three main subunits: a, b and c.

It localises to the cell inner membrane. In terms of biological role, produces ATP from ADP in the presence of a proton gradient across the membrane. The gamma chain is believed to be important in regulating ATPase activity and the flow of protons through the CF(0) complex. This is ATP synthase gamma chain from Rickettsia peacockii (strain Rustic).